Reading from the N-terminus, the 837-residue chain is A disintegrin and metalloproteinase with thrombospondin motifs 4 (837 aa).

The first 51 residues, 1–51 (MSQTGSHPGRGLAGRWLWGAQPCLLLPIVPLSWLVWLLLLLLASLLPSARL), serve as a signal peptide directing secretion. Residues 52-212 (ASPLPREEEI…PSPRPRRAKR (161 aa)) constitute a propeptide that is removed on maturation. Asn-68 is a glycosylation site (N-linked (GlcNAc...) asparagine). The disordered stretch occupies residues 166–191 (EGGTPNSAGGPGAHILRRKSPASGQG). The short motif at 192–199 (PMCNVKAP) is the Cysteine switch element. A Zn(2+)-binding site is contributed by Cys-194. Positions 218-428 (RFVETLVVAD…GYGHCLLDKP (211 aa)) constitute a Peptidase M12B domain. 11 disulfides stabilise this stretch: Cys-293–Cys-345, Cys-322–Cys-327, Cys-339–Cys-423, Cys-377–Cys-407, Cys-449–Cys-472, Cys-460–Cys-482, Cys-467–Cys-501, Cys-495–Cys-506, Cys-532–Cys-569, Cys-536–Cys-574, and Cys-547–Cys-559. His-361 contacts Zn(2+). Glu-362 is an active-site residue. The Zn(2+) site is built by His-365 and His-371. One can recognise a Disintegrin domain in the interval 437-519 (TFPGKDYDAD…DQLQDFNIPQ (83 aa)). The 56-residue stretch at 520–575 (AGGWGPWGPWGDCSRTCGGGVQFSSRDCTRPVPRNGGKYCEGRRTRFRSCNTEDCP) folds into the TSP type-1 domain. The tract at residues 686–837 (SKQSGSFRKF…LRRRPWVGRK (152 aa)) is spacer.

Interacts with SRPX2. Zn(2+) serves as cofactor. In terms of processing, the precursor is cleaved by a furin endopeptidase. Glycosylated. Can be O-fucosylated by POFUT2 on a serine or a threonine residue found within the consensus sequence C1-X(2)-(S/T)-C2-G of the TSP type-1 repeat domains where C1 and C2 are the first and second cysteine residue of the repeat, respectively. Fucosylated repeats can then be further glycosylated by the addition of a beta-1,3-glucose residue by the glucosyltransferase, B3GALTL. Fucosylation mediates the efficient secretion of ADAMTS family members. Can also be C-glycosylated with one or two mannose molecules on tryptophan residues within the consensus sequence W-X-X-W of the TPRs, and N-glycosylated. These other glycosylations can also facilitate secretion.

It is found in the secreted. It localises to the extracellular space. The protein resides in the extracellular matrix. It catalyses the reaction Glutamyl endopeptidase. Bonds cleaved include 370-Thr-Glu-Gly-Glu-|-Ala-Arg-Gly-Ser-377 in the interglobular domain of mammalian aggrecan.. In terms of biological role, cleaves aggrecan, a cartilage proteoglycan, at the '392-Glu-|-Ala-393' site and may be involved in its turnover. Also cleaves COMP. May play an important role in the destruction of aggrecan in arthritic diseases. The chain is A disintegrin and metalloproteinase with thrombospondin motifs 4 (ADAMTS4) from Pongo abelii (Sumatran orangutan).